The sequence spans 148 residues: Large ribosomal subunit protein uL15 (148 aa).

Residues 1-30 (MPSRLRKTRKLRGHVSHGHGRIGKHRKHPG) show a composition bias toward basic residues. Residues 1–38 (MPSRLRKTRKLRGHVSHGHGRIGKHRKHPGGRGNAGGL) form a disordered region. His-39 is subject to (3S)-3-hydroxyhistidine. Lys-47 and Lys-55 each carry N6-acetyllysine. A Phosphoserine modification is found at Ser-68. An N6-acetyllysine modification is found at Lys-110.

The protein belongs to the universal ribosomal protein uL15 family. As to quaternary structure, component of the large ribosomal subunit. Post-translationally, hydroxylated on His-39 by MINA.

Its subcellular location is the cytoplasm. In terms of biological role, component of the large ribosomal subunit. The ribosome is a large ribonucleoprotein complex responsible for the synthesis of proteins in the cell. The protein is Large ribosomal subunit protein uL15 (RPL27A) of Homo sapiens (Human).